The sequence spans 282 residues: ATP synthase gamma chain (282 aa).

This sequence belongs to the ATPase gamma chain family. F-type ATPases have 2 components, CF(1) - the catalytic core - and CF(0) - the membrane proton channel. CF(1) has five subunits: alpha(3), beta(3), gamma(1), delta(1), epsilon(1). CF(0) has three main subunits: a, b and c.

The protein localises to the cell membrane. Its function is as follows. Produces ATP from ADP in the presence of a proton gradient across the membrane. The gamma chain is believed to be important in regulating ATPase activity and the flow of protons through the CF(0) complex. The chain is ATP synthase gamma chain from Clostridium botulinum (strain 657 / Type Ba4).